The following is a 158-amino-acid chain: S-ribosylhomocysteine lyase (158 aa).

Residues His54, His58, and Cys125 each coordinate Fe cation.

It belongs to the LuxS family. As to quaternary structure, homodimer. Requires Fe cation as cofactor.

The enzyme catalyses S-(5-deoxy-D-ribos-5-yl)-L-homocysteine = (S)-4,5-dihydroxypentane-2,3-dione + L-homocysteine. In terms of biological role, involved in the synthesis of autoinducer 2 (AI-2) which is secreted by bacteria and is used to communicate both the cell density and the metabolic potential of the environment. The regulation of gene expression in response to changes in cell density is called quorum sensing. Catalyzes the transformation of S-ribosylhomocysteine (RHC) to homocysteine (HC) and 4,5-dihydroxy-2,3-pentadione (DPD). In Lactococcus lactis subsp. cremoris (strain MG1363), this protein is S-ribosylhomocysteine lyase.